The following is a 466-amino-acid chain: Glucose-6-phosphate 1-dehydrogenase 1 (466 aa).

NADP(+) is bound by residues Ser48, 88–89 (DV), and Lys141. Substrate is bound by residues His171, Lys175, Glu209, and Asp228. Catalysis depends on His233, which acts as the Proton acceptor. Residues Lys319 and Lys324 each coordinate substrate.

Belongs to the glucose-6-phosphate dehydrogenase family.

It catalyses the reaction D-glucose 6-phosphate + NADP(+) = 6-phospho-D-glucono-1,5-lactone + NADPH + H(+). The protein operates within carbohydrate degradation; pentose phosphate pathway; D-ribulose 5-phosphate from D-glucose 6-phosphate (oxidative stage): step 1/3. Its function is as follows. Catalyzes the oxidation of glucose 6-phosphate to 6-phosphogluconolactone. This is Glucose-6-phosphate 1-dehydrogenase 1 from Mycobacterium tuberculosis (strain CDC 1551 / Oshkosh).